Consider the following 771-residue polypeptide: Metal transporter CNNM4 (771 aa).

Over 1 to 175 (MAPGGGGGRR…LLFMVEEHGR (175 aa)) the chain is Extracellular. Asparagine 119 carries N-linked (GlcNAc...) asparagine glycosylation. The region spanning 175–355 (RFLPLWLHIL…EPYNDLVKEE (181 aa)) is the CNNM transmembrane domain. The helical transmembrane segment at 176–196 (FLPLWLHILLVMVLLVLSGIF) threads the bilayer. Over 197-237 (SGLNLGLMALDPMELRIVQNCGTEKERKYARKIEPIRRKGN) the chain is Cytoplasmic. The segment at residues 238–258 (YLLCSLLLGNVLVNTSLTILL) is an intramembrane region (helical). Residues 259-261 (DNL) are Cytoplasmic-facing. Residues 262–282 (IGSGIMAVASSTIGIVIFGEI) traverse the membrane as a helical segment. Over 283–290 (LPQALCSR) the chain is Extracellular. The helical transmembrane segment at 291 to 313 (HGLAVGANTIVLTKVFMLLTFPL) threads the bilayer. At 314–771 (SFPISKLLDF…LHRASEEETI (458 aa)) the chain is on the cytoplasmic side. 2 consecutive CBS domains span residues 374 to 435 (MTQL…CTPL) and 442 to 508 (YNHP…ILDE). Phosphoserine is present on residues serine 657, serine 661, and serine 766.

It belongs to the ACDP family. As to quaternary structure, interacts with COX11. As to expression, cornea, retina, teeth (at protein level). In the retina it is predominantly localized to the outer plexiform layer, inner plexiform layer and ganglion cell layer. In the tooth strongest expression is observed in the cell body of the ameloblasts. Expressed at high levels in the gastrointestinal tract and testis.

It localises to the cell membrane. Functionally, probable metal transporter. The interaction with the metal ion chaperone COX11 suggests that it may play a role in sensory neuron functions. May play a role in biomineralization and retinal function. The polypeptide is Metal transporter CNNM4 (Cnnm4) (Mus musculus (Mouse)).